Consider the following 564-residue polypeptide: Dihydroxy-acid dehydratase (564 aa).

Cys-53 lines the [2Fe-2S] cluster pocket. Position 85 (Asp-85) interacts with Mg(2+). Cys-126 contacts [2Fe-2S] cluster. Mg(2+) is bound by residues Asp-127 and Lys-128. Lys-128 carries the N6-carboxylysine modification. A [2Fe-2S] cluster-binding site is contributed by Cys-203. Residue Glu-454 participates in Mg(2+) binding. Ser-480 functions as the Proton acceptor in the catalytic mechanism.

Belongs to the IlvD/Edd family. As to quaternary structure, homodimer. Requires [2Fe-2S] cluster as cofactor. Mg(2+) is required as a cofactor.

It catalyses the reaction (2R)-2,3-dihydroxy-3-methylbutanoate = 3-methyl-2-oxobutanoate + H2O. It carries out the reaction (2R,3R)-2,3-dihydroxy-3-methylpentanoate = (S)-3-methyl-2-oxopentanoate + H2O. It functions in the pathway amino-acid biosynthesis; L-isoleucine biosynthesis; L-isoleucine from 2-oxobutanoate: step 3/4. The protein operates within amino-acid biosynthesis; L-valine biosynthesis; L-valine from pyruvate: step 3/4. In terms of biological role, functions in the biosynthesis of branched-chain amino acids. Catalyzes the dehydration of (2R,3R)-2,3-dihydroxy-3-methylpentanoate (2,3-dihydroxy-3-methylvalerate) into 2-oxo-3-methylpentanoate (2-oxo-3-methylvalerate) and of (2R)-2,3-dihydroxy-3-methylbutanoate (2,3-dihydroxyisovalerate) into 2-oxo-3-methylbutanoate (2-oxoisovalerate), the penultimate precursor to L-isoleucine and L-valine, respectively. The sequence is that of Dihydroxy-acid dehydratase from Clavibacter michiganensis subsp. michiganensis (strain NCPPB 382).